The following is a 262-amino-acid chain: Hydroxyethylthiazole kinase (262 aa).

Met50 is a substrate binding site. The ATP site is built by Arg125 and Thr171. Gly198 is a binding site for substrate.

Belongs to the Thz kinase family. Requires Mg(2+) as cofactor.

It catalyses the reaction 5-(2-hydroxyethyl)-4-methylthiazole + ATP = 4-methyl-5-(2-phosphooxyethyl)-thiazole + ADP + H(+). It participates in cofactor biosynthesis; thiamine diphosphate biosynthesis; 4-methyl-5-(2-phosphoethyl)-thiazole from 5-(2-hydroxyethyl)-4-methylthiazole: step 1/1. Functionally, catalyzes the phosphorylation of the hydroxyl group of 4-methyl-5-beta-hydroxyethylthiazole (THZ). The polypeptide is Hydroxyethylthiazole kinase (Shigella boydii serotype 18 (strain CDC 3083-94 / BS512)).